A 246-amino-acid chain; its full sequence is Acetylglutamate kinase (246 aa).

Residues 30-31 (GG), Arg52, and Asn151 each bind substrate.

The protein belongs to the acetylglutamate kinase family. ArgB subfamily.

The protein resides in the cytoplasm. The catalysed reaction is N-acetyl-L-glutamate + ATP = N-acetyl-L-glutamyl 5-phosphate + ADP. It participates in amino-acid biosynthesis; L-arginine biosynthesis; N(2)-acetyl-L-ornithine from L-glutamate: step 2/4. Catalyzes the ATP-dependent phosphorylation of N-acetyl-L-glutamate. The protein is Acetylglutamate kinase of Methanopyrus kandleri (strain AV19 / DSM 6324 / JCM 9639 / NBRC 100938).